The sequence spans 236 residues: Concanavalin-Ma (236 aa).

Mn(2+) is bound by residues E8 and D10. D10, Y12, N14, and D19 together coordinate Ca(2+). Y12 contacts a carbohydrate. Residues D19 and H24 each contribute to the Mn(2+) site. Residue 98–99 (LY) coordinates a carbohydrate. Position 207 (D207) interacts with Ca(2+). R227 is a binding site for a carbohydrate.

It belongs to the leguminous lectin family. Homotetramer.

In terms of biological role, glucose/D-mannose specific lectin. The polypeptide is Concanavalin-Ma (Canavalia rosea (Beach bean)).